The following is a 214-amino-acid chain: Probable septum site-determining protein MinC (214 aa).

This sequence belongs to the MinC family. In terms of assembly, interacts with MinD and FtsZ.

Cell division inhibitor that blocks the formation of polar Z ring septums. Rapidly oscillates between the poles of the cell to destabilize FtsZ filaments that have formed before they mature into polar Z rings. Prevents FtsZ polymerization. This is Probable septum site-determining protein MinC from Thermoanaerobacter pseudethanolicus (strain ATCC 33223 / 39E) (Clostridium thermohydrosulfuricum).